An 865-amino-acid chain; its full sequence is Probable beta-glucosidase J (865 aa).

Residue aspartate 233 is part of the active site. Residues asparagine 330, asparagine 447, asparagine 503, and asparagine 764 are each glycosylated (N-linked (GlcNAc...) asparagine). The 169-residue stretch at 411 to 579 (TGQPGYTFRV…DTDTAIQQAV (169 aa)) folds into the PA14 domain.

This sequence belongs to the glycosyl hydrolase 3 family.

Its subcellular location is the secreted. The enzyme catalyses Hydrolysis of terminal, non-reducing beta-D-glucosyl residues with release of beta-D-glucose.. The protein operates within glycan metabolism; cellulose degradation. Functionally, beta-glucosidases are one of a number of cellulolytic enzymes involved in the degradation of cellulosic biomass. Catalyzes the last step releasing glucose from the inhibitory cellobiose. The polypeptide is Probable beta-glucosidase J (bglJ) (Aspergillus fumigatus (strain ATCC MYA-4609 / CBS 101355 / FGSC A1100 / Af293) (Neosartorya fumigata)).